A 279-amino-acid chain; its full sequence is Thymidylate synthase 1 (279 aa).

A dUMP-binding site is contributed by 141–142; sequence RR. The active-site Nucleophile is cysteine 161. DUMP contacts are provided by residues 181-184, asparagine 192, and 222-224; these read RSND and HVY. Position 184 (aspartate 184) interacts with (6R)-5,10-methylene-5,6,7,8-tetrahydrofolate. A (6R)-5,10-methylene-5,6,7,8-tetrahydrofolate-binding site is contributed by alanine 278.

It belongs to the thymidylate synthase family. Bacterial-type ThyA subfamily. Homodimer.

Its subcellular location is the cytoplasm. It catalyses the reaction dUMP + (6R)-5,10-methylene-5,6,7,8-tetrahydrofolate = 7,8-dihydrofolate + dTMP. Its pathway is pyrimidine metabolism; dTTP biosynthesis. Functionally, catalyzes the reductive methylation of 2'-deoxyuridine-5'-monophosphate (dUMP) to 2'-deoxythymidine-5'-monophosphate (dTMP) while utilizing 5,10-methylenetetrahydrofolate (mTHF) as the methyl donor and reductant in the reaction, yielding dihydrofolate (DHF) as a by-product. This enzymatic reaction provides an intracellular de novo source of dTMP, an essential precursor for DNA biosynthesis. The sequence is that of Thymidylate synthase 1 from Bacillus subtilis (strain 168).